The chain runs to 550 residues: Lariat debranching enzyme (550 aa).

2 residues coordinate a divalent metal cation: cysteine 8 and histidine 10. A Phosphoserine modification is found at serine 28. 2 residues coordinate a divalent metal cation: aspartate 39 and asparagine 84. Residues 124–154 form a lariat recognition loop region; the sequence is SGIFKSHDYRKGHFECPPYNSSTIRSIYHVR. Lysine 128 carries the post-translational modification N6-acetyllysine. The a divalent metal cation site is built by histidine 174, histidine 226, and histidine 228. A disordered region spans residues 390–550; the sequence is EHHQCGEYEQ…AVDDGDASAE (161 aa). The span at 416–426 shows a compositional bias: polar residues; that stretch reads NTDTSALSSIN. Positions 430-445 are enriched in acidic residues; that stretch reads IMLDEEEEEEEEEEEA. Over residues 450–483 the composition is skewed to polar residues; that stretch reads SDMNTPSVEPASDQASDLSTSFSDIRNLPSSMFV. A phosphoserine mark is found at serine 470, serine 480, serine 484, serine 485, serine 489, serine 491, serine 494, serine 505, and serine 520. Residues 498–528 are compositionally biased toward basic and acidic residues; the sequence is KCGETVESGDEKDLAKFPLKRLSDEHEPEQR.

The protein belongs to the lariat debranching enzyme family. It depends on Fe(2+) as a cofactor. Requires Zn(2+) as cofactor. Mn(2+) serves as cofactor.

The protein localises to the nucleus. Active in presence of diverse metals including Fe(2+), Zn(2+), Mn(2+). Also activated by Ca(2+). Binds two metal cations in two adjacent alpha and beta metal-binding pockets. In terms of biological role, cleaves the 2'-5' phosphodiester linkage at the branch point of excised lariat intron RNA and converts them into linear molecules that can be subsequently degraded, thereby facilitating ribonucleotide turnover. Linked to its role in pre-mRNA processing mechanism, may also participate in retrovirus replication and have an antiviral cell-intrinsic defense function. The chain is Lariat debranching enzyme (Dbr1) from Mus musculus (Mouse).